A 317-amino-acid polypeptide reads, in one-letter code: Acetyl-coenzyme A carboxylase carboxyl transferase subunit alpha (317 aa).

The CoA carboxyltransferase C-terminal domain occupies 39 to 293 (KLEDKNRKLT…KDALGASLER (255 aa)).

It belongs to the AccA family. As to quaternary structure, acetyl-CoA carboxylase is a heterohexamer composed of biotin carboxyl carrier protein (AccB), biotin carboxylase (AccC) and two subunits each of ACCase subunit alpha (AccA) and ACCase subunit beta (AccD).

It is found in the cytoplasm. The catalysed reaction is N(6)-carboxybiotinyl-L-lysyl-[protein] + acetyl-CoA = N(6)-biotinyl-L-lysyl-[protein] + malonyl-CoA. It participates in lipid metabolism; malonyl-CoA biosynthesis; malonyl-CoA from acetyl-CoA: step 1/1. Functionally, component of the acetyl coenzyme A carboxylase (ACC) complex. First, biotin carboxylase catalyzes the carboxylation of biotin on its carrier protein (BCCP) and then the CO(2) group is transferred by the carboxyltransferase to acetyl-CoA to form malonyl-CoA. This Chromohalobacter salexigens (strain ATCC BAA-138 / DSM 3043 / CIP 106854 / NCIMB 13768 / 1H11) protein is Acetyl-coenzyme A carboxylase carboxyl transferase subunit alpha.